A 773-amino-acid chain; its full sequence is MESRTLSLLEFPKVLDRLAGYAASEPAAAACRALGPMGDAARLATEQRKLVEALELRRDRAFEFTAFPDIEPLFAVLESERRVLDLDALVALSHVLSRVAALREALGREEGDSVLGAIVYRTPWAKKTQAALARCLGPDGRLKDESSPELFSVRQEIRSIHQTILTKVKEFISERELGPLLQDDYVTISSDRYVLPLRANFKGRLPGVIHDYSQTGETIYVEPFFLVEINNRLQELKNEEREAEARVMAFLTGLARDERREVAASYRLLVDCDVLWAKAALCDAFGGTLPEVAQGRAVRLLAARHPLLALAGPDSAVAQDLELAPDQRALIVTGANAGGKTVCLKTLGLLAAMALSGLPVPAGEGSSLPFFAKIFVFLGDEQSLEDHLSTFTAQIRHLSRVWPDIDADTLVLLDEFGAGTDPSQGAALAQAVVDGLLDRGAYLAAATHFPALKAYGLSREGVRAACMLFDPATKKPLYRLAYDQVGASIALDVAREHGLPEDILERANRYLLLDGNDTGLVFDRLNDLALRREHELEAIAAKRLAEEGKIQKLKDNLKKAQDKLVEEIRELSRDIVRRHEAGRLGRKEAQKALADVRKRLIDESNELTGGPGGEAAAVAFDLSVVAPGDSVQVTSWNKIGVVREKDLKRQAAKVDIGGVSLWVNVADLAPAAGKPAKAGGGAVVTPTASEAKGLGLVVDLRGMRADVAESELLAFVDNALLRGHGELEVIHGRGTGALRREVHRMLKDHPQVASFAIAPEDRGGDGMTMVTLK.

An ATP-binding site is contributed by 334–341 (GANAGGKT). A Smr domain is found at 698-773 (VDLRGMRADV…GDGMTMVTLK (76 aa)).

Belongs to the DNA mismatch repair MutS family. MutS2 subfamily. Homodimer. Binds to stalled ribosomes, contacting rRNA.

Endonuclease that is involved in the suppression of homologous recombination and thus may have a key role in the control of bacterial genetic diversity. Functionally, acts as a ribosome collision sensor, splitting the ribosome into its 2 subunits. Detects stalled/collided 70S ribosomes which it binds and splits by an ATP-hydrolysis driven conformational change. Acts upstream of the ribosome quality control system (RQC), a ribosome-associated complex that mediates the extraction of incompletely synthesized nascent chains from stalled ribosomes and their subsequent degradation. Probably generates substrates for RQC. This chain is Endonuclease MutS2, found in Solidesulfovibrio magneticus (strain ATCC 700980 / DSM 13731 / RS-1) (Desulfovibrio magneticus).